The primary structure comprises 271 residues: Metal-staphylopine import system ATP-binding protein CntD (271 aa).

An ABC transporter domain is found at 6–251; that stretch reads VKHLTITDTW…PEHVYTKYLL (246 aa). Position 38–45 (38–45) interacts with ATP; the sequence is GESGSGKS.

This sequence belongs to the ABC transporter superfamily. As to quaternary structure, the complex is composed of two ATP-binding proteins (CntD and CntF), two transmembrane proteins (CntB and CntC) and a solute-binding protein (CntA).

It is found in the cell membrane. Its function is as follows. Part of the ABC transporter complex CntABCDF (Opp1) involved in the uptake of metal in complex with the metallophore staphylopine (StP). May be involved in the import of a large array of divalent metals ions such as nickel, cobalt, zinc, copper and iron. Probably responsible for energy coupling to the transport system. The sequence is that of Metal-staphylopine import system ATP-binding protein CntD from Staphylococcus aureus (strain Mu50 / ATCC 700699).